A 347-amino-acid chain; its full sequence is Inositol 2-dehydrogenase (347 aa).

This sequence belongs to the Gfo/Idh/MocA family. As to quaternary structure, homotetramer.

The enzyme catalyses myo-inositol + NAD(+) = scyllo-inosose + NADH + H(+). Involved in the oxidation of myo-inositol (MI) to 2-keto-myo-inositol (2KMI or 2-inosose). This Rubrobacter xylanophilus (strain DSM 9941 / JCM 11954 / NBRC 16129 / PRD-1) protein is Inositol 2-dehydrogenase.